The sequence spans 1883 residues: Zinc finger protein 106 (1883 aa).

Residues Ile6 and Lys37 each participate in a glycyl lysine isopeptide (Lys-Gly) (interchain with G-Cter in SUMO2) cross-link. The segment at His20 to His44 adopts a C2H2-type 1; atypical zinc-finger fold. Positions Ile39–Gly162 are disordered. The segment covering Glu52–Phe67 has biased composition (acidic residues). Glycyl lysine isopeptide (Lys-Gly) (interchain with G-Cter in SUMO2) cross-links involve residues Lys69 and Lys76. Composition is skewed to basic and acidic residues over residues Gln77 to Glu86, Ser96 to Ser116, and Pro128 to Gly138. Lys133 is covalently cross-linked (Glycyl lysine isopeptide (Lys-Gly) (interchain with G-Cter in SUMO2)). Residues Phe139–Pro148 show a composition bias toward polar residues. Residues Lys243, Lys287, and Lys305 each participate in a glycyl lysine isopeptide (Lys-Gly) (interchain with G-Cter in SUMO2) cross-link. The segment covering Gln322–Asn338 has biased composition (polar residues). The tract at residues Gln322 to Lys356 is disordered. Residues Lys356, Lys365, Lys371, and Lys417 each participate in a glycyl lysine isopeptide (Lys-Gly) (interchain with G-Cter in SUMO2) cross-link. Residues Ile389–Ala423 are disordered. The span at Gly412–Ala423 shows a compositional bias: polar residues. Phosphoserine is present on Ser422. Glycyl lysine isopeptide (Lys-Gly) (interchain with G-Cter in SUMO2) cross-links involve residues Lys451, Lys461, Lys477, Lys492, Lys505, Lys515, Lys525, Lys539, and Lys557. The segment at Cys457–Pro501 is disordered. Positions Lys461–Pro493 are enriched in polar residues. Positions Leu586–Glu637 are disordered. Ser590 is modified (phosphoserine). Residue Lys603 forms a Glycyl lysine isopeptide (Lys-Gly) (interchain with G-Cter in SUMO2) linkage. The segment covering Gly608 to Arg620 has biased composition (polar residues). Residues Ser641 and Ser661 each carry the phosphoserine modification. Glycyl lysine isopeptide (Lys-Gly) (interchain with G-Cter in SUMO2) cross-links involve residues Lys671, Lys684, Lys705, Lys721, Lys741, Lys775, and Lys807. Phosphoserine is present on residues Ser859, Ser861, Ser864, and Ser893. Residues Glu879 to Ile945 are disordered. Residues Pro888–Ala906 show a composition bias toward polar residues. Glycyl lysine isopeptide (Lys-Gly) (interchain with G-Cter in SUMO2) cross-links involve residues Lys905 and Lys911. Ser937 bears the Phosphoserine mark. Residue Lys953 forms a Glycyl lysine isopeptide (Lys-Gly) (interchain with G-Cter in SUMO2) linkage. Residues Gln958–Glu976 are compositionally biased toward polar residues. Disordered stretches follow at residues Gln958 to Ser982, Ala997 to Ser1048, Glu1121 to Ser1140, and Pro1182 to Ser1218. The residue at position 1021 (Thr1021) is a Phosphothreonine. A phosphoserine mark is found at Ser1025, Ser1026, and Ser1031. Positions Lys1035–Lys1045 are enriched in basic residues. Ser1249 is modified (phosphoserine). Residues Glu1252–Thr1483 are disordered. Residues Glu1255–Glu1277 show a composition bias toward basic and acidic residues. Residue Lys1265 forms a Glycyl lysine isopeptide (Lys-Gly) (interchain with G-Cter in SUMO2) linkage. Composition is skewed to polar residues over residues Asn1278–Asn1291 and Lys1299–Leu1312. Residues Ser1279, Ser1281, and Ser1284 each carry the phosphoserine modification. A Glycyl lysine isopeptide (Lys-Gly) (interchain with G-Cter in SUMO2) cross-link involves residue Lys1299. Ser1302 carries the phosphoserine modification. Lys1324 is covalently cross-linked (Glycyl lysine isopeptide (Lys-Gly) (interchain with G-Cter in SUMO2)). Ser1328 is subject to Phosphoserine. Residues Pro1333 to Thr1346 show a composition bias toward polar residues. Positions Ser1349–Arg1362 are enriched in basic residues. At Ser1370 the chain carries Phosphoserine. Residue Thr1372 is modified to Phosphothreonine. Residues Lys1380, Lys1392, and Lys1395 each participate in a glycyl lysine isopeptide (Lys-Gly) (interchain with G-Cter in SUMO2) cross-link. 2 stretches are compositionally biased toward basic and acidic residues: residues Glu1402–Glu1416 and Gly1444–Ile1456. Residue Lys1454 forms a Glycyl lysine isopeptide (Lys-Gly) (interchain with G-Cter in SUMO2) linkage. Residues Trp1457–Ile1481 show a composition bias toward polar residues. A Phosphoserine modification is found at Ser1468. Residues Lys1486 and Lys1504 each participate in a glycyl lysine isopeptide (Lys-Gly) (interchain with G-Cter in SUMO2) cross-link. Residues Ser1502–Ser1513 show a composition bias toward polar residues. Positions Ser1502–Phe1527 are disordered. WD repeat units follow at residues Gly1529–Glu1568, His1570–Gln1611, His1654–Thr1695, Gly1698–Lys1737, Gly1738–Val1775, and Gly1778–Cys1815. A Glycyl lysine isopeptide (Lys-Gly) (interchain with G-Cter in SUMO2) cross-link involves residue Lys1585. Residue Lys1737 forms a Glycyl lysine isopeptide (Lys-Gly) (interchain with G-Cter in SUMO2) linkage. A C2H2-type 2; atypical zinc finger spans residues Tyr1813–His1838. Lys1864 is covalently cross-linked (Glycyl lysine isopeptide (Lys-Gly) (interchain with G-Cter in SUMO2)).

As to quaternary structure, interacts with KNOP1. Interacts with TARDBP and NUP107. Interacts (via N-terminus) with RBM39. Interacts with the SH3 domains of FYN and GRB2. Phosphorylated by FYN in vitro.

The protein localises to the nucleus. It is found in the nucleolus. It localises to the nucleus speckle. In terms of biological role, RNA-binding protein. Specifically binds to 5'-GGGGCC-3' sequence repeats in RNA. Essential for maintenance of peripheral motor neuron and skeletal muscle function. Required for normal expression and/or alternative splicing of a number of genes in spinal cord and skeletal muscle, including the neurite outgrowth inhibitor RTN4. Also contributes to normal mitochondrial respiratory function in motor neurons, via an unknown mechanism. The chain is Zinc finger protein 106 (ZNF106) from Homo sapiens (Human).